A 1246-amino-acid polypeptide reads, in one-letter code: MASFPSPPLAAAAAAAPPRLAPGLPLAAAAVRRPSSLARRSSIALAAPANPLRCIHRRAVSPRLRRRTEAVGAASAAIGSLGEEREGCLSCFPRGRRRGRPGLARFAPCALPHTYGLSSLHSGLTGAKIRRRHVLHAAGPDEPHVASPTWSETALDKHYVDQPIGKEELEGFLNTPLPSHPKLVRGQLKNGLRYLILPNKVPANRFEAHMEVHVGSIDEEEDEQGIAHMIEHVAFLGSKKREKLLGTGARSNAYTDFHHTVFHIHSPTKTKEYGEDLLPSVLDALNEIAFHPKFSSSRVEKERRAILSELQMMNTIEYRVDCQLLQHLHSENKLSERFPIGLEEQIHKWDPDKIRRFHERWYYPANATLYLVGEIDDIPRAIREIEAVFEHTLPEGEAAPMSTASPFGAMASLFAPKLPGGLAASLTGERSPAADKIKPVKRERQAIRPPVEHKWSLPGVAQDAKPPAIFQHELIQSFSINMFCKIPVNQVQTYKDLRSVLMKRIFLSALHFRINTRYKSSNPPFTSVELDHSDSGREGCTVTTLTVTAEPQNWRSAIKVAVHEVRRLKEFGVTMGEMTRYMDALIKDSEQLAMMIDSVPSVDNLDFIMESDALRHTVMDQLQGHESLLAVAETVTLEEVNTVGAEVLEFISDYGKPDAPLPAAIVACVPKKVHMDGVGETDFEIHPEEITDSIKAGLEEPIYPEPELEVPKELITRSELEDLKLQRKPSFASLSKEENVVKIFDDETGIAQRRLSNGISINYKITQNEARVGVMRLIVGGGRATEDSESKGSVIVGVRTLSEGGCVGNFSREQVELFCVNNLINCSLESNEEFIFMEFRFALRDNGMRAAFQLLHMVLEHNVWLEDAFDRATQLYLSYYRSIPKSLERSTAHKLMLAMLNHDERFVEPSPHSLQKLTLQSVKDAVMNQFVGDNMEVSIVGDFTEEEVESCVLDYLGTVSAPKSSKTQEHIEKISFLPFPSDLHFQQVYIKDTDERACAYIAGPAPNRWGFATEGNDLFNVIRSSSGDAQVSESANTDLTERKHNDVRSHSLFFGITLSLLAEIINSRLFTTVRDSMGLTYDVSFELNLFDKLDLGWYVIAVTSTPSKVHKAVDACKGVLRGLHSNKIVERELDRAKRTLLMKHEAETKTNAYWLGLLAHLQSSSVPRKEISCIKELTMLYESATIEDLYLAYEHLKVDESSLFACIGIAGAESGEETTDDELDMGLHGMGPIGGRGLSTMTRPTT.

A chloroplast-targeting transit peptide spans 1-136 (MASFPSPPLA…AKIRRRHVLH (136 aa)). Position 228 (histidine 228) interacts with Zn(2+). Glutamate 231 serves as the catalytic Proton acceptor. Histidine 232 contributes to the Zn(2+) binding site. The active site involves glutamate 302. Glutamate 309 contributes to the Zn(2+) binding site.

It belongs to the peptidase M16 family. Zn(2+) is required as a cofactor.

It is found in the plastid. It localises to the chloroplast stroma. Cleaves presequences (transit peptides) from chloroplastic protein precursors. Initially recognizes a precursor by binding to the C-terminus of its transit peptide and then removes the transit peptide in a single endoproteolytic step. In a next step, pursues the cleavage of transit peptide to a subfragment form. This chain is Stromal processing peptidase, chloroplastic, found in Oryza sativa subsp. japonica (Rice).